The chain runs to 299 residues: Mitochondrial magnesium exporter 1 (299 aa).

Solcar repeat units lie at residues 12–103 (SNPV…GKRL), 112–200 (LTYP…LQEL), and 210–296 (ISTT…TNDL). The next 4 helical transmembrane spans lie at 79-99 (ISAP…VYAA), 114-134 (YPQI…VTVP), 216-236 (ILSG…FDVL), and 272-292 (ILPI…GVEL).

Belongs to the mitochondrial carrier (TC 2.A.29) family.

It localises to the mitochondrion membrane. Mediates efflux of magnesium ions from mitochondria, suggesting a role in magnesium homeostasis. The sequence is that of Mitochondrial magnesium exporter 1 from Drosophila melanogaster (Fruit fly).